The chain runs to 358 residues: Methionine import ATP-binding protein MetN (358 aa).

The ABC transporter domain maps to 14–255 (VVFDAVSKRF…SRHETTRALL (242 aa)). 52–59 (GRSGAGKS) serves as a coordination point for ATP.

Belongs to the ABC transporter superfamily. Methionine importer (TC 3.A.1.24) family. As to quaternary structure, the complex is composed of two ATP-binding proteins (MetN), two transmembrane proteins (MetI) and a solute-binding protein (MetQ).

It is found in the cell inner membrane. It catalyses the reaction L-methionine(out) + ATP + H2O = L-methionine(in) + ADP + phosphate + H(+). The catalysed reaction is D-methionine(out) + ATP + H2O = D-methionine(in) + ADP + phosphate + H(+). In terms of biological role, part of the ABC transporter complex MetNIQ involved in methionine import. Responsible for energy coupling to the transport system. This chain is Methionine import ATP-binding protein MetN, found in Rhizobium meliloti (strain 1021) (Ensifer meliloti).